The primary structure comprises 383 residues: 3-dehydroquinate synthase (383 aa).

NAD(+) contacts are provided by residues 81-86 (EGEVSK), 115-119 (GVVGD), 139-140 (TS), Lys-152, and Lys-161. Positions 194, 256, and 274 each coordinate Zn(2+).

It belongs to the sugar phosphate cyclases superfamily. Dehydroquinate synthase family. It depends on Co(2+) as a cofactor. The cofactor is Zn(2+). Requires NAD(+) as cofactor.

The protein resides in the cytoplasm. The catalysed reaction is 7-phospho-2-dehydro-3-deoxy-D-arabino-heptonate = 3-dehydroquinate + phosphate. It functions in the pathway metabolic intermediate biosynthesis; chorismate biosynthesis; chorismate from D-erythrose 4-phosphate and phosphoenolpyruvate: step 2/7. Catalyzes the conversion of 3-deoxy-D-arabino-heptulosonate 7-phosphate (DAHP) to dehydroquinate (DHQ). This chain is 3-dehydroquinate synthase, found in Nitrobacter hamburgensis (strain DSM 10229 / NCIMB 13809 / X14).